The sequence spans 79 residues: Protein GOLVEN 2 (79 aa).

The N-terminal stretch at 1-26 (MAIRVSHKSFLVALLLILFISSPTQA) is a signal peptide. The propeptide occupies 27–65 (RSLREVVRNRTLLVVEKSQESRKIRHEGGGSDVDGLMDM). Residues 49–79 (KIRHEGGGSDVDGLMDMDYNSANKKRPIHNR) are disordered. Tyr67 bears the Sulfotyrosine mark. Pro75 carries the post-translational modification Hydroxyproline.

It belongs to the RGF family. Binds to LRR receptor-like serine/threonine-protein kinases to trigger their dimerization with SERK proteins and subsequent signaling. Expressed in siliques, stems, hypocotyls, shoot apex, leaves, flowers and cotyledons, and, to a lower extent, in roots.

It is found in the secreted. The protein localises to the endoplasmic reticulum. In terms of biological role, signaling peptide (root growth factor) that regulates the pattern of root growth and lateral root development by modulating the length and the number of cortical cells in the root apical meristem (RAM), and the anticlinal asymmetric cell divisions in lateral root initiation cells. Also involved in the regulation of hypocotyl bending and root gravitropism, probably by influencing the formation of auxin gradients. Maintains the postembryonic root stem cell niche. The chain is Protein GOLVEN 2 from Arabidopsis thaliana (Mouse-ear cress).